The chain runs to 203 residues: CASP-like protein 2U6 (203 aa).

At 1–31 (MSEHRIPVAADKKISPPISAGEQKGCKGLKR) the chain is on the cytoplasmic side. Residues 32–52 (TDLMLRFAAFVCCTVTMVVLI) form a helical membrane-spanning segment. Residues 53 to 84 (TDKQTSAIQVPGFNNLTITKTVSFDLAKAFVY) lie on the Extracellular side of the membrane. N-linked (GlcNAc...) asparagine glycosylation occurs at N67. Residues 85-105 (LVSAAGIGAGYTLLVLVLSII) form a helical membrane-spanning segment. Residues 106-111 (SAERSK) are Cytoplasmic-facing. Residues 112–132 (AIAWFIFVFDQLITYVLLAAA) form a helical membrane-spanning segment. The Extracellular segment spans residues 133–164 (AASTEVAYMGAHAPPEASWLKVCSLFGRFCHQ). Residues 165 to 185 (LGASLVTSLISTVLFAFSAAI) form a helical membrane-spanning segment. The Cytoplasmic portion of the chain corresponds to 186–203 (SAYYLFSNTNVRPAYSKG).

Belongs to the Casparian strip membrane proteins (CASP) family. As to quaternary structure, homodimer and heterodimers.

It is found in the cell membrane. The polypeptide is CASP-like protein 2U6 (Selaginella moellendorffii (Spikemoss)).